Here is a 427-residue protein sequence, read N- to C-terminus: Anhydro-N-acetylmuramic acid kinase (427 aa).

32-39 serves as a coordination point for ATP; the sequence is GTSLDGMD.

Belongs to the anhydro-N-acetylmuramic acid kinase family.

The catalysed reaction is 1,6-anhydro-N-acetyl-beta-muramate + ATP + H2O = N-acetyl-D-muramate 6-phosphate + ADP + H(+). It functions in the pathway amino-sugar metabolism; 1,6-anhydro-N-acetylmuramate degradation. It participates in cell wall biogenesis; peptidoglycan recycling. Its function is as follows. Catalyzes the specific phosphorylation of 1,6-anhydro-N-acetylmuramic acid (anhMurNAc) with the simultaneous cleavage of the 1,6-anhydro ring, generating MurNAc-6-P. Is required for the utilization of anhMurNAc either imported from the medium or derived from its own cell wall murein, and thus plays a role in cell wall recycling. The sequence is that of Anhydro-N-acetylmuramic acid kinase from Psychrobacter cryohalolentis (strain ATCC BAA-1226 / DSM 17306 / VKM B-2378 / K5).